The sequence spans 261 residues: Ribonuclease PH (261 aa).

Phosphate-binding positions include Arg-87 and 125-127; that span reads GTR.

Belongs to the RNase PH family. In terms of assembly, homohexameric ring arranged as a trimer of dimers.

The catalysed reaction is tRNA(n+1) + phosphate = tRNA(n) + a ribonucleoside 5'-diphosphate. Functionally, phosphorolytic 3'-5' exoribonuclease that plays an important role in tRNA 3'-end maturation. Removes nucleotide residues following the 3'-CCA terminus of tRNAs; can also add nucleotides to the ends of RNA molecules by using nucleoside diphosphates as substrates, but this may not be physiologically important. Probably plays a role in initiation of 16S rRNA degradation (leading to ribosome degradation) during starvation. The polypeptide is Ribonuclease PH (Desulforudis audaxviator (strain MP104C)).